A 154-amino-acid chain; its full sequence is Telokin (154 aa).

The tract at residues Ile-1–Glu-24 is disordered. Residues Ser-10–Asn-19 show a composition bias toward polar residues. An Ig-like C2-type domain is found at Pro-42–Glu-133. The segment at Thr-134–Glu-154 is disordered. The segment covering Gly-141–Glu-154 has biased composition (acidic residues).

The protein belongs to the protein kinase superfamily. CAMK Ser/Thr protein kinase family. Binds calmodulin.

Its function is as follows. Corresponds to the C-terminus of smooth muscle myosin light chain kinase. In Meleagris gallopavo (Wild turkey), this protein is Telokin.